A 339-amino-acid polypeptide reads, in one-letter code: Aspartate carbamoyltransferase catalytic subunit (339 aa).

Carbamoyl phosphate-binding residues include R59 and T60. Residue K87 participates in L-aspartate binding. Residues R109, H142, and Q145 each coordinate carbamoyl phosphate. Residues R182 and R253 each contribute to the L-aspartate site. Carbamoyl phosphate is bound by residues G294 and P295.

This sequence belongs to the aspartate/ornithine carbamoyltransferase superfamily. ATCase family. As to quaternary structure, heterododecamer (2C3:3R2) of six catalytic PyrB chains organized as two trimers (C3), and six regulatory PyrI chains organized as three dimers (R2).

The catalysed reaction is carbamoyl phosphate + L-aspartate = N-carbamoyl-L-aspartate + phosphate + H(+). The protein operates within pyrimidine metabolism; UMP biosynthesis via de novo pathway; (S)-dihydroorotate from bicarbonate: step 2/3. Catalyzes the condensation of carbamoyl phosphate and aspartate to form carbamoyl aspartate and inorganic phosphate, the committed step in the de novo pyrimidine nucleotide biosynthesis pathway. This Prochlorococcus marinus (strain NATL2A) protein is Aspartate carbamoyltransferase catalytic subunit.